Consider the following 337-residue polypeptide: Ral GTPase-activating protein subunit alpha-1 (337 aa).

As to quaternary structure, component of the heterodimeric RalGAP1 complex with RALGAPB. Heterodimerization is required for activity. Interacts with the HLH region of TCF3/isoform E12.

It is found in the cytoplasm. It localises to the nucleus. In terms of biological role, catalytic subunit of the heterodimeric RalGAP1 complex which acts as a GTPase activator for the Ras-like small GTPases RALA and RALB. This is Ral GTPase-activating protein subunit alpha-1 from Sus scrofa (Pig).